The primary structure comprises 4545 residues: Prolow-density lipoprotein receptor-related protein 1 (4545 aa).

The first 19 residues, 1 to 19 (MLTPPLLLLLPLLSALVAG), serve as a signal peptide directing secretion. Over 20-4424 (ATMDAPKTCS…SQQQPGHMTS (4405 aa)) the chain is Extracellular. LDL-receptor class A domains follow at residues 27-66 (TCSP…EICP) and 72-110 (RCPP…AHCR). Disulfide bonds link cysteine 28–cysteine 41, cysteine 35–cysteine 54, cysteine 48–cysteine 65, cysteine 73–cysteine 86, cysteine 80–cysteine 99, and cysteine 93–cysteine 109. Residues asparagine 115, asparagine 137, asparagine 186, asparagine 240, and asparagine 275 are each glycosylated (N-linked (GlcNAc...) asparagine). LDL-receptor class B repeat units lie at residues 293–335 (GNFY…DPAM), 336–379 (GKVF…DLVS), and 380–423 (RLVY…FENY). Asparagine 358 carries an N-linked (GlcNAc...) asparagine glycan. Residue asparagine 447 is glycosylated (N-linked (GlcNAc...) asparagine). 4 LDL-receptor class B repeats span residues 572–614 (GFIY…DWMG), 615–660 (DNLY…DPLN), 661–711 (GWMY…DIPA), and 712–755 (GRLY…HGNY). Residues 639–671 (TRKTLIEGKMTHPRAIVVDPLNGWMYWTDWEED) form an HAT 1 repeat. Asparagine 730 is a glycosylation site (N-linked (GlcNAc...) asparagine). 8 LDL-receptor class A domains span residues 854 to 892 (QCQP…ALCH), 895 to 933 (TCPS…ATCS), 936 to 973 (TCPP…ASCA), 976 to 1013 (TCFP…AGCS), 1015 to 1053 (SCSS…ANCT), 1062 to 1099 (GCHS…KGCE), 1104 to 1142 (VCDP…ENCE), and 1145 to 1184 (ACRP…ELCD). Cystine bridges form between cysteine 855–cysteine 867, cysteine 862–cysteine 880, cysteine 874–cysteine 891, cysteine 896–cysteine 908, cysteine 903–cysteine 921, cysteine 915–cysteine 932, cysteine 937–cysteine 949, cysteine 944–cysteine 962, cysteine 956–cysteine 972, cysteine 977–cysteine 990, cysteine 985–cysteine 1003, cysteine 997–cysteine 1012, cysteine 1016–cysteine 1028, cysteine 1023–cysteine 1041, cysteine 1035–cysteine 1052, cysteine 1063–cysteine 1076, cysteine 1070–cysteine 1089, cysteine 1083–cysteine 1098, cysteine 1105–cysteine 1119, cysteine 1113–cysteine 1132, cysteine 1126–cysteine 1141, cysteine 1146–cysteine 1160, cysteine 1153–cysteine 1173, and cysteine 1167–cysteine 1183. 6 residues coordinate Ca(2+): tryptophan 872, aspartate 875, aspartate 877, aspartate 879, aspartate 885, and glutamate 886. N-linked (GlcNAc...) asparagine glycosylation occurs at asparagine 929. Residues tryptophan 1033, aspartate 1036, aspartate 1038, aspartate 1040, aspartate 1046, and glutamate 1047 each contribute to the Ca(2+) site. N-linked (GlcNAc...) asparagine glycosylation occurs at asparagine 1051. 6 residues coordinate Ca(2+): tryptophan 1081, aspartate 1084, aspartate 1086, aspartate 1088, aspartate 1094, and glutamate 1095. Residue asparagine 1156 is glycosylated (N-linked (GlcNAc...) asparagine). N-linked (GlcNAc...) asparagine glycans are attached at residues asparagine 1196 and asparagine 1219. LDL-receptor class B repeat units lie at residues 1310–1356 (SALY…DWIA), 1357–1399 (GNIY…DPRD), 1400–1446 (GILF…DYLE), 1447–1491 (KRIL…YGGE), and 1492–1532 (VYWT…YHPS). HAT repeat units lie at residues 1380 to 1413 (TTLL…SLPR) and 1470 to 1503 (MEVL…NTLA). Asparagine 1512, asparagine 1559, asparagine 1576, asparagine 1617, and asparagine 1646 each carry an N-linked (GlcNAc...) asparagine glycan. LDL-receptor class B repeat units follow at residues 1628 to 1670 (QRVY…DWVS), 1671 to 1714 (RNLF…HPLR), 1715 to 1754 (GKLY…DFPE), and 1755 to 1799 (SKLY…MGDK). The stretch at 1653–1684 (VVSADLPNAHGLAVDWVSRNLFWTSYDTNKKQ) is one HAT 4 repeat. Asparagine 1724, asparagine 1734, asparagine 1764, asparagine 1826, and asparagine 1934 each carry an N-linked (GlcNAc...) asparagine glycan. 4 LDL-receptor class B repeats span residues 1935–1977 (DTIY…DWIA), 1978–2020 (GNIY…HPEK), 2021–2064 (GYLF…DYQG), and 2065–2108 (GKLY…FEDF). N-linked (GlcNAc...) asparagine glycosylation is present at asparagine 1996. Lysine 2010 carries the post-translational modification N6-acetyllysine. Asparagine 2049 carries N-linked (GlcNAc...) asparagine glycosylation. Asparagine 2118 and asparagine 2128 each carry an N-linked (GlcNAc...) asparagine glycan. LDL-receptor class B repeat units follow at residues 2254 to 2295 (NRIF…HRGW), 2296 to 2344 (DTLY…DECQ), 2345 to 2389 (NLMF…DHRA), 2390 to 2432 (EKLY…YGEH), and 2433 to 2474 (IFWT…VAND). HAT repeat units lie at residues 2277 to 2309 (TTIV…STIT), 2325 to 2358 (TVIT…LHPS), and 2411 to 2444 (HRYV…RAVQ). N-linked (GlcNAc...) asparagine glycans are attached at residues asparagine 2473, asparagine 2503, and asparagine 2522. LDL-receptor class A domains are found at residues 2524 to 2563 (SCRA…SYCN), 2566 to 2602 (RCKK…IPCN), 2605 to 2641 (ACGV…MNCS), 2639 to 2690 (NCSA…RDCP), 2696 to 2732 (RCPL…THCN), 2734 to 2771 (FCSE…AHCE), and 2774 to 2814 (TCGP…AGCL). Intrachain disulfides connect cysteine 2525–cysteine 2538, cysteine 2533–cysteine 2551, cysteine 2545–cysteine 2562, cysteine 2567–cysteine 2579, cysteine 2574–cysteine 2592, and cysteine 2586–cysteine 2601. Asparagine 2602 carries N-linked (GlcNAc...) asparagine glycosylation. Intrachain disulfides connect cysteine 2606-cysteine 2618, cysteine 2613-cysteine 2631, cysteine 2625-cysteine 2640, cysteine 2640-cysteine 2667, cysteine 2645-cysteine 2680, cysteine 2674-cysteine 2689, cysteine 2697-cysteine 2709, cysteine 2704-cysteine 2722, cysteine 2716-cysteine 2731, cysteine 2735-cysteine 2747, cysteine 2742-cysteine 2760, cysteine 2754-cysteine 2770, cysteine 2775-cysteine 2788, cysteine 2782-cysteine 2801, and cysteine 2795-cysteine 2813. N-linked (GlcNAc...) asparagine glycosylation is found at asparagine 2621 and asparagine 2639. Asparagine 2816 carries N-linked (GlcNAc...) asparagine glycosylation. 3 consecutive LDL-receptor class A domains span residues 2818–2855 (TCDD…PECE), 2858–2899 (TCGP…PHCT), and 2904–2941 (KCNA…RGCH). Cystine bridges form between cysteine 2819–cysteine 2831, cysteine 2826–cysteine 2844, cysteine 2838–cysteine 2854, cysteine 2859–cysteine 2871, cysteine 2866–cysteine 2885, cysteine 2879–cysteine 2898, cysteine 2905–cysteine 2918, cysteine 2913–cysteine 2931, cysteine 2925–cysteine 2940, cysteine 2987–cysteine 2997, and cysteine 2993–cysteine 3006. Asparagine 2906 carries an N-linked (GlcNAc...) asparagine glycan. In terms of domain architecture, EGF-like 1; calcium-binding spans 2983 to 3018 (DVDECSTTFPCSQLCINTHGSYKCLCVEGYAPRGGD). N-linked (GlcNAc...) asparagine glycans are attached at residues asparagine 3049 and asparagine 3090. LDL-receptor class B repeat units follow at residues 3070–3114 (QMIY…DWVG), 3115–3157 (GNLY…DVQN), 3158–3201 (GYLY…DYVT), 3202–3244 (ERIY…FEDY), and 3245–3285 (VYWT…FHAL). HAT repeat units lie at residues 3128–3171 (EVSK…HSLI) and 3224–3256 (RHVV…KSIN). N-linked (GlcNAc...) asparagine glycosylation is found at asparagine 3265 and asparagine 3334. LDL-receptor class A domains follow at residues 3334–3371 (NCTA…PDCP), 3374–3410 (KCRP…ANCD), 3413–3450 (VCLP…RDCP), 3453–3491 (TCAP…ANCT), 3494–3533 (TCGV…EECD), 3536–3572 (TCEP…ESCT), 3575–3611 (PCSE…KDCT), 3613–3649 (RCDM…EACG), 3654–3692 (TCPL…EECT), 3695–3733 (QCPP…EDCE), and 3741–3778 (HCKD…EDCS). Intrachain disulfides connect cysteine 3335–cysteine 3347, cysteine 3342–cysteine 3360, cysteine 3354–cysteine 3370, cysteine 3375–cysteine 3387, cysteine 3382–cysteine 3400, cysteine 3394–cysteine 3409, cysteine 3414–cysteine 3427, cysteine 3421–cysteine 3440, cysteine 3434–cysteine 3449, cysteine 3454–cysteine 3467, cysteine 3461–cysteine 3480, cysteine 3474–cysteine 3490, cysteine 3495–cysteine 3508, cysteine 3502–cysteine 3521, cysteine 3515–cysteine 3532, cysteine 3537–cysteine 3549, cysteine 3544–cysteine 3562, cysteine 3556–cysteine 3571, cysteine 3576–cysteine 3588, cysteine 3583–cysteine 3601, cysteine 3595–cysteine 3610, cysteine 3614–cysteine 3626, cysteine 3621–cysteine 3639, cysteine 3633–cysteine 3648, cysteine 3655–cysteine 3667, cysteine 3662–cysteine 3680, cysteine 3674–cysteine 3691, cysteine 3696–cysteine 3710, cysteine 3704–cysteine 3723, cysteine 3717–cysteine 3732, cysteine 3742–cysteine 3755, cysteine 3750–cysteine 3768, and cysteine 3762–cysteine 3777. Asparagine 3489 carries N-linked (GlcNAc...) asparagine glycosylation. An N-linked (GlcNAc...) asparagine glycan is attached at asparagine 3663. N-linked (GlcNAc...) asparagine glycosylation is found at asparagine 3789 and asparagine 3840. The LDL-receptor class B 31 repeat unit spans residues 3913-3925 (GRVYWTNWHTGTI). A glycan (N-linked (GlcNAc...) asparagine) is linked at asparagine 3954. LDL-receptor class B repeat units follow at residues 3971-4013 (GNVY…DPLR), 4014-4057 (GTMY…DYHN), and 4058-4102 (ERLY…FEDY). One copy of the HAT 10 repeat lies at 3995 to 4027 (TLISGMIDEPHAIVVDPLRGTMYWSDWGNHPKI). N-linked (GlcNAc...) asparagine glycosylation is found at asparagine 4076, asparagine 4126, and asparagine 4180. 4 consecutive EGF-like domains span residues 4197-4230 (RPGT…YTGD), 4233-4269 (ELDQ…PRCT), 4270-4302 (QQVC…FLGD), and 4305-4341 (QYRQ…TRCE). Disulfide bonds link cysteine 4201/cysteine 4211, cysteine 4205/cysteine 4221, cysteine 4237/cysteine 4247, cysteine 4241/cysteine 4257, cysteine 4259/cysteine 4268, cysteine 4273/cysteine 4283, cysteine 4277/cysteine 4293, cysteine 4309/cysteine 4319, cysteine 4313/cysteine 4329, and cysteine 4331/cysteine 4340. Asparagine 4280 is a glycosylation site (N-linked (GlcNAc...) asparagine). Asparagine 4365 carries an N-linked (GlcNAc...) asparagine glycan. One can recognise an EGF-like 6 domain in the interval 4376-4410 (LTCIDHCSNGGSCTMNSKMMPECQCPPHMTGPRCE). 3 disulfide bridges follow: cysteine 4378-cysteine 4388, cysteine 4382-cysteine 4398, and cysteine 4400-cysteine 4409. The helical transmembrane segment at 4425–4445 (ILIPLLLLLLLLLVAGVVFWY) threads the bilayer. At 4446–4545 (KRRVRGAKGF…PEDEIGDPLA (100 aa)) the chain is on the cytoplasmic side. The tract at residues 4446–4545 (KRRVRGAKGF…PEDEIGDPLA (100 aa)) is interaction with MAFB. Threonine 4461 carries the phosphothreonine modification. Phosphotyrosine is present on tyrosine 4508. Phosphoserine is present on residues serine 4518, serine 4521, and serine 4524.

The protein belongs to the LDLR family. As to quaternary structure, heterodimer of an 85-kDa membrane-bound carboxyl subunit and a non-covalently attached 515-kDa N-terminal subunit. Intracellular domain interacts with MAFB. Found in a complex with PID1/PCLI1, LRP1 and CUBNI. Interacts with SNX17, PID1/PCLI1, PDGF and CUBN. The intracellular domain interacts with SHC1, GULP1 and DAB1. Can weakly interact (via NPXY motif) with DAB2 (via PID domain); the interaction is enhanced by tyrosine phosphorylation of the NPXY motif. Interacts with MDK; promotes neuronal survival. Interacts with LRPAP1; this interaction is followed by rapid internalization. Interacts with uPA/PLAU and PAI1/SERPINE1, either individually or in complex with each other, leading to rapid endocytosis; this interaction is abolished in the presence of LRPAP1/RAP. Also interacts with tPA/PLAT alone or in complex with SERPINE1. Interacts with the urokinase receptor PLAUR; this interaction leads to PLAUR internalization and is impaired in the presence of SORL1. Interacts with PDGFB. Interacts with TAU/MAPT, leading to endocytosis; this interaction is reduced in the presence of LRPAP1/RAP. Interacts with IGFBP3. Interacts with ADGRG6. Cleaved into a 85 kDa membrane-spanning subunit (LRP-85) and a 515 kDa large extracellular domain (LRP-515) that remains non-covalently associated. Gamma-secretase-dependent cleavage of LRP-85 releases the intracellular domain from the membrane. Post-translationally, phosphorylated on serine and threonine residues. In terms of processing, phosphorylated on tyrosine residues upon stimulation with PDGF. Tyrosine phosphorylation promotes interaction with SHC1.

It localises to the cell membrane. The protein resides in the membrane. It is found in the coated pit. Its subcellular location is the golgi outpost. The protein localises to the cytoplasm. It localises to the cytoskeleton. The protein resides in the microtubule organizing center. It is found in the nucleus. Functionally, endocytic receptor involved in endocytosis and in phagocytosis of apoptotic cells. Required for early embryonic development. Involved in cellular lipid homeostasis. Involved in the plasma clearance of chylomicron remnants and activated LRPAP1 (alpha 2-macroglobulin), as well as the local metabolism of complexes between plasminogen activators and their endogenous inhibitors. Acts as an LRPAP1 alpha-2-macroglobulin receptor. Acts as a TAU/MAPT receptor and controls the endocytosis of TAU/MAPT as well as its subsequent spread. May modulate cellular events, such as APP metabolism, kinase-dependent intracellular signaling, neuronal calcium signaling as well as neurotransmission. Also acts as a receptor for IGFBP3 to mediate cell growth inhibition. The polypeptide is Prolow-density lipoprotein receptor-related protein 1 (Rattus norvegicus (Rat)).